The following is a 168-amino-acid chain: Transcriptional repressor NrdR (168 aa).

A zinc finger lies at 3–34 (CPYCGFAQDRVVDSRESKEADSIRRRRECERC). Residues 49-139 (YMVVKKDGRR…VYRDFKDVNE (91 aa)) form the ATP-cone domain.

This sequence belongs to the NrdR family. Requires Zn(2+) as cofactor.

Functionally, negatively regulates transcription of bacterial ribonucleotide reductase nrd genes and operons by binding to NrdR-boxes. This chain is Transcriptional repressor NrdR, found in Acidobacterium capsulatum (strain ATCC 51196 / DSM 11244 / BCRC 80197 / JCM 7670 / NBRC 15755 / NCIMB 13165 / 161).